A 137-amino-acid polypeptide reads, in one-letter code: MQKLIIFALVVLCVGSEAKTFTRCGLVHELRKHGFEENLMRNWVCLVEHESSRDTSKTNTNRNGSKDYGLFQINDRYWCSKGASPGKDCNVKCSDLLTDDITKAAKCAKKIYKRHRFDAWYGWKNHCQGSLPDISSC.

Positions M1–A18 are cleaved as a signal peptide. Positions K19–C137 constitute a C-type lysozyme domain. Cystine bridges form between C24–C137, C45–C127, C79–C93, and C89–C107. Catalysis depends on residues E50 and D67.

This sequence belongs to the glycosyl hydrolase 22 family.

The enzyme catalyses Hydrolysis of (1-&gt;4)-beta-linkages between N-acetylmuramic acid and N-acetyl-D-glucosamine residues in a peptidoglycan and between N-acetyl-D-glucosamine residues in chitodextrins.. In terms of biological role, lysozymes have primarily a bacteriolytic function; those in tissues and body fluids are associated with the monocyte-macrophage system and enhance the activity of immunoagents. Active against E.coli and M.luteus. The sequence is that of Lysozyme from Bombyx mori (Silk moth).